Here is a 199-residue protein sequence, read N- to C-terminus: Probable septum site-determining protein MinC (199 aa).

The protein belongs to the MinC family. In terms of assembly, interacts with MinD and FtsZ.

Functionally, cell division inhibitor that blocks the formation of polar Z ring septums. Rapidly oscillates between the poles of the cell to destabilize FtsZ filaments that have formed before they mature into polar Z rings. Prevents FtsZ polymerization. This Persephonella marina (strain DSM 14350 / EX-H1) protein is Probable septum site-determining protein MinC.